A 337-amino-acid polypeptide reads, in one-letter code: DNA-directed RNA polymerase subunit alpha (337 aa).

Residues 1-233 (MIQKNWQELI…DQLSIFVNFE (233 aa)) are alpha N-terminal domain (alpha-NTD). Residues 249–337 (FNPALLKKVD…DLAKRYEDQY (89 aa)) form an alpha C-terminal domain (alpha-CTD) region.

Belongs to the RNA polymerase alpha chain family. As to quaternary structure, homodimer. The RNAP catalytic core consists of 2 alpha, 1 beta, 1 beta' and 1 omega subunit. When a sigma factor is associated with the core the holoenzyme is formed, which can initiate transcription.

The enzyme catalyses RNA(n) + a ribonucleoside 5'-triphosphate = RNA(n+1) + diphosphate. DNA-dependent RNA polymerase catalyzes the transcription of DNA into RNA using the four ribonucleoside triphosphates as substrates. The polypeptide is DNA-directed RNA polymerase subunit alpha (Brucella suis (strain ATCC 23445 / NCTC 10510)).